We begin with the raw amino-acid sequence, 644 residues long: CTP synthase (644 aa).

The Glutamine amidotransferase type-1 domain occupies 300-551 (SIAIVGKYTK…LGLILASVDR (252 aa)). Active-site for GATase activity residues include C399, H527, and E529.

This sequence belongs to the CTP synthase family.

It catalyses the reaction UTP + L-glutamine + ATP + H2O = CTP + L-glutamate + ADP + phosphate + 2 H(+). Its pathway is pyrimidine metabolism; CTP biosynthesis via de novo pathway; CTP from UDP: step 2/2. Its function is as follows. Catalyzes the ATP-dependent amination of UTP to CTP with either L-glutamine or ammonia as the source of nitrogen. Constitutes the rate-limiting enzyme in the synthesis of cytosine nucleotides. In Drosophila pseudoobscura pseudoobscura (Fruit fly), this protein is CTP synthase.